The sequence spans 569 residues: Cationic amino acid transporter 5 (569 aa).

Over 1 to 67 (MEGEERGYWR…KQSEHEMKRC (67 aa)) the chain is Cytoplasmic. The helical transmembrane segment at 68-88 (LTWWDLVWFGFGSVIGAGIFV) threads the bilayer. Topologically, residues 89–97 (LTGQEAHEQ) are extracellular. Residues 98-118 (AGPAIVLSYVVSGLSAMLSVF) traverse the membrane as a helical segment. Residues 119–143 (CYTEFAVEIPVAGGSFAYLRIELGD) lie on the Cytoplasmic side of the membrane. A helical transmembrane segment spans residues 144–164 (FAAFITAGNILLESIVGTAAV). Over 165-192 (ARAWTSYFATLLNRSPNALRIKTDLSSG) the chain is Extracellular. The chain crosses the membrane as a helical span at residues 193 to 213 (FNLLDPIAVVVIAASATIASI). Topologically, residues 214-222 (STRKTSLLN) are cytoplasmic. A helical membrane pass occupies residues 223-243 (WIASAINTLVIFFVIIAGFIH). Topologically, residues 244–251 (ADTSNLTP) are extracellular. A helical transmembrane segment spans residues 252–272 (FLPFGPEGVFRAAAVVYFAYG). At 273 to 290 (GFDSIATMAEETKNPSRD) the chain is on the cytoplasmic side. The helical transmembrane segment at 291–311 (IPIGLLGSMSIITVIYCLMAL) threads the bilayer. The Extracellular portion of the chain corresponds to 312-341 (SLSMMQKYTDIDPNAAYSVAFQSVGMKWGK). A helical transmembrane segment spans residues 342–362 (YLVALGALKGMTTVLLVGALG). Topologically, residues 363 to 389 (QARYVTHIARTHMIPPIFALVHPKTGT) are cytoplasmic. Residues 390–410 (PINANLLVAIPSALIAFFSGL) form a helical membrane-spanning segment. Asp-411 is a topological domain (extracellular). A helical membrane pass occupies residues 412 to 432 (VLASLLSISTLFIFTMMPIAL). At 433–450 (LVRRYYVRQDTPRVHLIK) the chain is on the cytoplasmic side. A helical transmembrane segment spans residues 451–471 (LITCLLFVVVSSMGTSAYWGM). The Extracellular segment spans residues 472 to 477 (QRKGSW). A helical transmembrane segment spans residues 478–498 (IGYTVTVPFWFLGTLGIVFFV). Residues 499–505 (PQQRTPK) are Cytoplasmic-facing. A helical transmembrane segment spans residues 506-526 (VWGVPLVPWLPCLSIATNIFL). Over 527–537 (MGSLGAMAFVR) the chain is Extracellular. The helical transmembrane segment at 538–558 (FGVCTLAMLLYYFLLGLHATF) threads the bilayer. Topologically, residues 559–569 (DMAHQQIVPRT) are cytoplasmic.

It belongs to the amino acid-polyamine-organocation (APC) superfamily. Cationic amino acid transporter (CAT) (TC 2.A.3.3) family. Expressed in roots, stems, flowers, seeds, and leaves. Mostly present in leaf rims and cotyledons of developing seedlings.

The protein localises to the cell membrane. Its function is as follows. High-affinity permease involved in the transport of the cationic amino acids (e.g. arginine, and, to a lower extent, citrulline and glutamate). Transport mostly basic amino acids, and, to a lower extent neutral and acidic amino acids. The polypeptide is Cationic amino acid transporter 5 (CAT5) (Arabidopsis thaliana (Mouse-ear cress)).